A 188-amino-acid polypeptide reads, in one-letter code: Pyridoxal 5'-phosphate synthase subunit PdxT (188 aa).

46–48 serves as a coordination point for L-glutamine; it reads GES. Catalysis depends on C78, which acts as the Nucleophile. L-glutamine contacts are provided by residues R105 and 134–135; that span reads IR. Catalysis depends on charge relay system residues H170 and E172.

It belongs to the glutaminase PdxT/SNO family. In the presence of PdxS, forms a dodecamer of heterodimers. Only shows activity in the heterodimer.

It carries out the reaction aldehydo-D-ribose 5-phosphate + D-glyceraldehyde 3-phosphate + L-glutamine = pyridoxal 5'-phosphate + L-glutamate + phosphate + 3 H2O + H(+). It catalyses the reaction L-glutamine + H2O = L-glutamate + NH4(+). The protein operates within cofactor biosynthesis; pyridoxal 5'-phosphate biosynthesis. Catalyzes the hydrolysis of glutamine to glutamate and ammonia as part of the biosynthesis of pyridoxal 5'-phosphate. The resulting ammonia molecule is channeled to the active site of PdxS. This is Pyridoxal 5'-phosphate synthase subunit PdxT from Thermotoga neapolitana (strain ATCC 49049 / DSM 4359 / NBRC 107923 / NS-E).